The sequence spans 286 residues: Probable endonuclease 4 (286 aa).

Residues His-67, His-107, Glu-144, Asp-178, His-181, His-215, Asp-228, His-230, and Glu-260 each coordinate Zn(2+).

This sequence belongs to the AP endonuclease 2 family. Requires Zn(2+) as cofactor.

The enzyme catalyses Endonucleolytic cleavage to 5'-phosphooligonucleotide end-products.. Functionally, endonuclease IV plays a role in DNA repair. It cleaves phosphodiester bonds at apurinic or apyrimidinic (AP) sites, generating a 3'-hydroxyl group and a 5'-terminal sugar phosphate. This chain is Probable endonuclease 4, found in Chloroflexus aggregans (strain MD-66 / DSM 9485).